The sequence spans 623 residues: Set1/Ash2 histone methyltransferase complex subunit ASH2 (623 aa).

Residues 1–18 (MAAAGAGPGPGVSAGPGP) are compositionally biased toward gly residues. Residues 1-62 (MAAAGAGPGP…SGEAESGDAN (62 aa)) form a PHD-type; atypical zinc finger. The interval 1–99 (MAAAGAGPGP…MDTQAGSVDE (99 aa)) is disordered. Residues 36-56 (AAGAGEGPSAAPGAEPSSGEA) show a composition bias toward low complexity. A DNA-binding region spans residues 63 to 172 (LVDVSGLETE…MCLSALANLT (110 aa)). Over residues 84–95 (GDTSEVMDTQAG) the composition is skewed to polar residues. S96 bears the Phosphoserine mark. Residues 112-145 (CGICTKWFTADTFGIDTSSCLPFMTNYSFHCNVC) form a C4-type zinc finger. Residues 230 to 247 (LVKEHPDPGSKDPEEDYP) are compositionally biased toward basic and acidic residues. Positions 230–326 (LVKEHPDPGS…AQRLPPHGYP (97 aa)) are disordered. Over residues 265-277 (NQKQSSAVSASGN) the composition is skewed to polar residues. Gly residues predominate over residues 278-290 (LNGGIAAGSSGKG). R291 carries the asymmetric dimethylarginine; by PRMT1 and PRMT5 modification. S311 bears the Phosphoserine mark. The tract at residues 311 to 623 (SDPLFSAQRL…DGRRSPPWEP (313 aa)) is interaction with RBBP5. One can recognise a B30.2/SPRY domain in the interval 355 to 578 (LDCWAGKPIP…VSINFGPSFK (224 aa)).

Interacts with HCFC1. Core component of several methyltransferase-containing complexes including MLL1/MLL, MLL2/3 (also named ASCOM complex) and MLL4/WBP7. Each complex is at least composed of ASH2L, RBBP5, WDR5, DPY30, one or more specific histone methyltransferases (KMT2A/MLL1, KMT2D/MLL2, KMT2C/MLL3 and KMT2B/MLL4), and the facultative components PAGR1, BACC1, CHD8, E2F6, HCFC1, HCFC2, HSP70, INO80C, KDM6A, KANSL1, LAS1L, MAX, MCRS1, MEN1, MGA, KAT8/MOF, NCOA6, PAXIP1/PTIP, PELP1, PHF20, PRP31, RING2, RUVB1/TIP49A, RUVB2/TIP49B, SENP3, TAF1, TAF4, TAF6, TAF7, TAF9, TEX10 and alpha- and beta-tubulin. Component of the SET1 complex, at least composed of the catalytic subunit (SETD1A or SETD1B), WDR5, WDR82, RBBP5, ASH2L/ASH2, CXXC1/CFP1, HCFC1 and DPY30. Found in a complex with RBBP5, ASH2L, DPY30, KMT2A, KMT2D and WDR5. Component of a histone methylation complex composed of at least ZNF335, RBBP5, ASH2L and WDR5; the complex may have histone H3-specific methyltransferase activity, however does not have specificity for 'Lys-4' of histone H3. Within the complex, interacts with ZNF335. Interacts with RBBP5. Components of this complex may associate with components of a nuclear receptor-mediated transcription complex to form a complex at least composed of ZNF335, HCFC1, CCAR2, EMSY, MKI67, RBBP5, ASH2L and WDR5. Within this complex also interacts with CCAR2 and EMSY. Interacts with DPY30. Interacts with SETD1A and SETD1B. Both monomethylated and dimethylated on arginine residues in the C-terminus. Arg-291 is the major site. Methylation is not required for nuclear localization, nor for MLL complex integrity or maintenance of global histone H3K4me3 levels. Ubiquitously expressed, with abundant expression in the heart, skeletal muscle and kidney. Low expression is seen in spleen, lung and testis.

Its subcellular location is the nucleus. In terms of biological role, transcriptional regulator. Component or associated component of some histone methyltransferase complexes which regulates transcription through recruitment of those complexes to gene promoters. Component of the Set1/Ash2 histone methyltransferase (HMT) complex, a complex that specifically methylates 'Lys-4' of histone H3, but not if the neighboring 'Lys-9' residue is already methylated. As part of the MLL1/MLL complex it is involved in methylation and dimethylation at 'Lys-4' of histone H3. May play a role in hematopoiesis. In association with RBBP5 and WDR5, stimulates the histone methyltransferase activities of KMT2A, KMT2B, KMT2C, KMT2D, SETD1A and SETD1B. The sequence is that of Set1/Ash2 histone methyltransferase complex subunit ASH2 (Ash2l) from Mus musculus (Mouse).